Consider the following 200-residue polypeptide: Probable molybdenum cofactor guanylyltransferase (200 aa).

GTP-binding positions include Leu-8 to Gly-10, Lys-20, Asp-66, and Asp-97. Residue Asp-97 coordinates Mg(2+).

Belongs to the MobA family. Requires Mg(2+) as cofactor.

It localises to the cytoplasm. The catalysed reaction is Mo-molybdopterin + GTP + H(+) = Mo-molybdopterin guanine dinucleotide + diphosphate. Its function is as follows. Transfers a GMP moiety from GTP to Mo-molybdopterin (Mo-MPT) cofactor (Moco or molybdenum cofactor) to form Mo-molybdopterin guanine dinucleotide (Mo-MGD) cofactor. This Bacillus velezensis (strain DSM 23117 / BGSC 10A6 / LMG 26770 / FZB42) (Bacillus amyloliquefaciens subsp. plantarum) protein is Probable molybdenum cofactor guanylyltransferase.